The following is a 185-amino-acid chain: Dehydrin ERD14 (185 aa).

4 stretches are compositionally biased toward basic and acidic residues: residues Met-1 to Val-13, Val-25 to Glu-45, Phe-52 to Asp-78, and Lys-103 to Asp-134. 2 disordered regions span residues Met-1–Val-138 and Glu-166–Glu-185. Ala-2 is subject to N-acetylalanine. Ser-59 is subject to Phosphoserine. 2 tandem repeats follow at residues Glu-112 to Pro-132 and Pro-154 to Lys-174. The interval Glu-112 to Lys-174 is 2 X 21 AA repeats, Lys-rich.

This sequence belongs to the plant dehydrin family. As to expression, in stems, cauline leaves, roots and flowers. Low levels found in maturing seeds. Absent in dry seeds.

Intrinsically disordered protein acting as a chaperone. Prevents heat-induced aggregation and/or inactivation of various substrates. Binds to acidic phospholipid vesicles without affecting membrane fluidity. This chain is Dehydrin ERD14 (ERD14), found in Arabidopsis thaliana (Mouse-ear cress).